A 210-amino-acid chain; its full sequence is GEM-like protein 7 (210 aa).

Positions 88 to 166 constitute a GRAM domain; sequence KIYKRLFKVC…CKINGVNQSQ (79 aa).

It belongs to the GEM family.

In Arabidopsis thaliana (Mouse-ear cress), this protein is GEM-like protein 7.